The primary structure comprises 74 residues: Acyl carrier protein (74 aa).

In terms of domain architecture, Carrier spans 1 to 73 (MAVFEKVQEI…DLVAYVEEKT (73 aa)). Residue serine 35 is modified to O-(pantetheine 4'-phosphoryl)serine.

The protein belongs to the acyl carrier protein (ACP) family. In terms of processing, 4'-phosphopantetheine is transferred from CoA to a specific serine of apo-ACP by AcpS. This modification is essential for activity because fatty acids are bound in thioester linkage to the sulfhydryl of the prosthetic group.

Its subcellular location is the cytoplasm. It participates in lipid metabolism; fatty acid biosynthesis. In terms of biological role, carrier of the growing fatty acid chain in fatty acid biosynthesis. This is Acyl carrier protein from Streptococcus thermophilus (strain CNRZ 1066).